The sequence spans 582 residues: Type I secretion system ATP-binding protein PrsD (582 aa).

3 consecutive transmembrane segments (helical) span residues 22–42 (FIGVGVASALVNLLYLTGSFF), 59–79 (LIALSLLALLLYAFQGAFELI), and 148–168 (IAICFLFHPVIGLIAIIGGLI). The ABC transmembrane type-1 domain occupies 22-301 (FIGVGVASAL…AIGNWRGLVA (280 aa)). The region spanning 332–568 (LTVEGLASGP…VLRPQQVERQ (237 aa)) is the ABC transporter domain. 366–373 (GPSASGKS) serves as a coordination point for ATP.

This sequence belongs to the ABC transporter superfamily. Part of a type I secretion system composed of PrsD and PrsE.

It is found in the cell inner membrane. Its function is as follows. Mediates secretion of glycanase ExsH. This is Type I secretion system ATP-binding protein PrsD (prsD) from Rhizobium meliloti (strain 1021) (Ensifer meliloti).